Consider the following 433-residue polypeptide: Phosphomethylpyrimidine synthase (433 aa).

Residues Asn-69, Met-98, Tyr-127, His-163, 185–187, 226–229, and Glu-265 each bind substrate; these read SRG and DALR. Position 269 (His-269) interacts with Zn(2+). Tyr-292 is a binding site for substrate. A Zn(2+)-binding site is contributed by His-333. [4Fe-4S] cluster contacts are provided by Cys-409, Cys-412, and Cys-416.

The protein belongs to the ThiC family. Requires [4Fe-4S] cluster as cofactor.

The enzyme catalyses 5-amino-1-(5-phospho-beta-D-ribosyl)imidazole + S-adenosyl-L-methionine = 4-amino-2-methyl-5-(phosphooxymethyl)pyrimidine + CO + 5'-deoxyadenosine + formate + L-methionine + 3 H(+). The protein operates within cofactor biosynthesis; thiamine diphosphate biosynthesis. Catalyzes the synthesis of the hydroxymethylpyrimidine phosphate (HMP-P) moiety of thiamine from aminoimidazole ribotide (AIR) in a radical S-adenosyl-L-methionine (SAM)-dependent reaction. This Finegoldia magna (strain ATCC 29328 / DSM 20472 / WAL 2508) (Peptostreptococcus magnus) protein is Phosphomethylpyrimidine synthase.